A 157-amino-acid chain; its full sequence is Endoribonuclease YbeY (157 aa).

Residues histidine 123, histidine 127, and histidine 133 each coordinate Zn(2+).

It belongs to the endoribonuclease YbeY family. Requires Zn(2+) as cofactor.

It is found in the cytoplasm. Its function is as follows. Single strand-specific metallo-endoribonuclease involved in late-stage 70S ribosome quality control and in maturation of the 3' terminus of the 16S rRNA. In Desulfitobacterium hafniense (strain Y51), this protein is Endoribonuclease YbeY.